The following is a 319-amino-acid chain: 4-hydroxy-3-methylbut-2-enyl diphosphate reductase (319 aa).

Cys17 is a binding site for [4Fe-4S] cluster. Residues His46 and His79 each contribute to the (2E)-4-hydroxy-3-methylbut-2-enyl diphosphate site. 2 residues coordinate dimethylallyl diphosphate: His46 and His79. Isopentenyl diphosphate contacts are provided by His46 and His79. Position 101 (Cys101) interacts with [4Fe-4S] cluster. (2E)-4-hydroxy-3-methylbut-2-enyl diphosphate is bound at residue His129. Dimethylallyl diphosphate is bound at residue His129. His129 is an isopentenyl diphosphate binding site. The Proton donor role is filled by Glu131. Thr170 contributes to the (2E)-4-hydroxy-3-methylbut-2-enyl diphosphate binding site. Position 200 (Cys200) interacts with [4Fe-4S] cluster. (2E)-4-hydroxy-3-methylbut-2-enyl diphosphate is bound by residues Ser228, Ser229, Asn230, and Ser273. Positions 228, 229, 230, and 273 each coordinate dimethylallyl diphosphate. Isopentenyl diphosphate is bound by residues Ser228, Ser229, Asn230, and Ser273.

It belongs to the IspH family. It depends on [4Fe-4S] cluster as a cofactor.

The enzyme catalyses isopentenyl diphosphate + 2 oxidized [2Fe-2S]-[ferredoxin] + H2O = (2E)-4-hydroxy-3-methylbut-2-enyl diphosphate + 2 reduced [2Fe-2S]-[ferredoxin] + 2 H(+). It catalyses the reaction dimethylallyl diphosphate + 2 oxidized [2Fe-2S]-[ferredoxin] + H2O = (2E)-4-hydroxy-3-methylbut-2-enyl diphosphate + 2 reduced [2Fe-2S]-[ferredoxin] + 2 H(+). Its pathway is isoprenoid biosynthesis; dimethylallyl diphosphate biosynthesis; dimethylallyl diphosphate from (2E)-4-hydroxy-3-methylbutenyl diphosphate: step 1/1. The protein operates within isoprenoid biosynthesis; isopentenyl diphosphate biosynthesis via DXP pathway; isopentenyl diphosphate from 1-deoxy-D-xylulose 5-phosphate: step 6/6. Its function is as follows. Catalyzes the conversion of 1-hydroxy-2-methyl-2-(E)-butenyl 4-diphosphate (HMBPP) into a mixture of isopentenyl diphosphate (IPP) and dimethylallyl diphosphate (DMAPP). Acts in the terminal step of the DOXP/MEP pathway for isoprenoid precursor biosynthesis. The chain is 4-hydroxy-3-methylbut-2-enyl diphosphate reductase from Cereibacter sphaeroides (strain ATCC 17025 / ATH 2.4.3) (Rhodobacter sphaeroides).